Consider the following 288-residue polypeptide: 11-beta-hydroxysteroid dehydrogenase 1 (288 aa).

Residues 1–4 (MKKY) lie on the Cytoplasmic side of the membrane. The chain crosses the membrane as a helical; Signal-anchor for type II membrane protein span at residues 5–20 (LLPVLVLCLGYYYSTN). Over 21–288 (EEFRPEMLQG…SYNRDLFVSN (268 aa)) the chain is Lumenal. Residues 37–63 (GASKGIGREMAYHLSKMGAHVVLTARS), 88–89 (TM), and 115–117 (NHI) each bind NADP(+). N-linked (GlcNAc...) asparagine glycosylation occurs at Asn158. Substrate is bound at residue Ser166. Tyr179 functions as the Proton acceptor in the catalytic mechanism. 179 to 183 (YSASK) contributes to the NADP(+) binding site. Asn203 is a glycosylation site (N-linked (GlcNAc...) asparagine). NADP(+)-binding positions include 212 to 218 (GFIDTET) and 214 to 218 (IDTET).

It belongs to the short-chain dehydrogenases/reductases (SDR) family. In terms of assembly, homodimer. Post-translationally, glycosylated. Liver, kidney, lung and testis. Brain. Expressed in liver (at protein level).

It is found in the endoplasmic reticulum membrane. It carries out the reaction an 11beta-hydroxysteroid + NADP(+) = an 11-oxosteroid + NADPH + H(+). The catalysed reaction is corticosterone + NADP(+) = 11-dehydrocorticosterone + NADPH + H(+). The enzyme catalyses a 7beta-hydroxysteroid + NADP(+) = a 7-oxosteroid + NADPH + H(+). It catalyses the reaction 7-oxocholesterol + NADPH + H(+) = 7beta-hydroxycholesterol + NADP(+). It carries out the reaction chenodeoxycholate + NADP(+) = 7-oxolithocholate + NADPH + H(+). The catalysed reaction is 7-oxolithocholate + NADPH + H(+) = ursodeoxycholate + NADP(+). The enzyme catalyses glycochenodeoxycholate + NADP(+) = 7-oxoglycolithocholate + NADPH + H(+). It catalyses the reaction taurochenodeoxycholate + NADP(+) = 7-oxotaurolithocholate + NADPH + H(+). It carries out the reaction tauroursodeoxycholate + NADP(+) = 7-oxotaurolithocholate + NADPH + H(+). The catalysed reaction is glycoursodeoxycholate + NADP(+) = 7-oxoglycolithocholate + NADPH + H(+). The enzyme catalyses 7-oxopregnenolone + NADPH + H(+) = 7beta-hydroxypregnenolone + NADP(+). It catalyses the reaction 3beta,7alpha-dihydroxyandrost-5-en-17-one + NADP(+) = 3beta-hydroxy-5-androstene-7,17-dione + NADPH + H(+). It carries out the reaction 3beta-hydroxy-5-androstene-7,17-dione + NADPH + H(+) = 3beta,7beta-dihydroxyandrost-5-en-17-one + NADP(+). The catalysed reaction is 3beta-hydroxy-5alpha-androstane-7,17-dione + NADPH + H(+) = 3beta,7beta-dihydroxy-5alpha-androstan-17-one + NADP(+). Its function is as follows. Controls the reversible conversion of biologically active glucocorticoids such as 11-dehydrocorticosterone to corticosterone using NADP(H). Participates in the corticosteroid receptor-mediated anti-inflammatory response, as well as metabolic and homeostatic processes. Bidirectional in vitro, predominantly functions as a reductase in vivo, thereby increasing the concentration of active glucocorticoids. It has broad substrate specificity, besides glucocorticoids, it accepts other steroid and sterol substrates. Interconverts 7-oxo- and 7-hydroxy-neurosteroids such as 7-oxopregnenolone and 7beta-hydroxypregnenolone, 7-oxodehydroepiandrosterone (3beta-hydroxy-5-androstene-7,17-dione) and 7beta-hydroxydehydroepiandrosterone (3beta,7beta-dihydroxyandrost-5-en-17-one), among others. Catalyzes the stereo-specific conversion of the major dietary oxysterol, 7-ketocholesterol (7-oxocholesterol), into the more polar 7-beta-hydroxycholesterol metabolite. 7-oxocholesterol is one of the most important oxysterols, it participates in several events such as induction of apoptosis, accumulation in atherosclerotic lesions, lipid peroxidation, and induction of foam cell formation. Mediates the 7-oxo reduction of 7-oxolithocholate mainly to chenodeoxycholate, and to a lesser extent to ursodeoxycholate, both in its free form and when conjugated to glycine or taurine, providing a link between glucocorticoid activation and bile acid metabolism. Catalyzes the synthesis of 7-beta-25-dihydroxycholesterol from 7-oxo-25-hydroxycholesterol in vitro, which acts as a ligand for the G-protein-coupled receptor (GPCR) Epstein-Barr virus-induced gene 2 (EBI2) and may thereby regulate immune cell migration. This Rattus norvegicus (Rat) protein is 11-beta-hydroxysteroid dehydrogenase 1.